We begin with the raw amino-acid sequence, 327 residues long: Transcription factor bHLH48 (327 aa).

Residues 137 to 179 are disordered; the sequence is EPAETDSMVENQNQSYSSGKRKEREKKVKSSTKKNKSSVESDK. The 51-residue stretch at 191–241 folds into the bHLH domain; it reads QATDNHSLAERARREKINARMKLLQELVPGCDKIQGTALVLDEIINHVQTL.

In terms of assembly, homodimer. In terms of tissue distribution, expressed in leaves, stems, and flowers.

The protein localises to the nucleus. This is Transcription factor bHLH48 (BHLH48) from Arabidopsis thaliana (Mouse-ear cress).